Consider the following 167-residue polypeptide: Epithelial membrane protein 2 (167 aa).

Residues 1–21 form a helical membrane-spanning segment; it reads MLVLLAFIIVFHITSAALLLV. N-linked (GlcNAc...) asparagine glycans are attached at residues Asn44, Asn47, and Asn52. 3 helical membrane passes run 67-87, 95-115, and 143-163; these read TMIL…LQLF, FVLT…AASI, and FILA…YLIL.

The protein belongs to the PMP-22/EMP/MP20 family. Interacts with PTK2; regulates PTK2 activation and localization. Interacts with ITGB3; regulates the levels of the heterodimer ITGA5-ITGB3 integrin surface expression. Interacts with P2RX7 (via C-terminus). Interacts with ITGB1; the interaction may be direct or indirect and ITGB1 has a heterodimer form.

The protein resides in the golgi apparatus membrane. Its subcellular location is the cell membrane. It is found in the apical cell membrane. It localises to the membrane raft. The protein localises to the cytoplasm. The protein resides in the nucleus. Its subcellular location is the perinuclear region. Functions as a key regulator of cell membrane composition by regulating protein surface expression. Also, plays a role in regulation of processes including cell migration, cell proliferation, cell contraction and cell adhesion. Regulates transepithelial migration of neutrophils into the alveolar lumen, potentially via mediation of cell surface expression of adhesion markers and lipid raft formation. Negatively regulates caveolae formation by reducing CAV1 expression and CAV1 amount by increasing lysosomal degradation. Facilitates surface trafficking and the formation of lipid rafts bearing GPI-anchor proteins. Regulates surface expression of MHC1 and ICAM1 proteins increasing susceptibility to T-cell mediated cytotoxicity. Regulates the plasma membrane expression of the integrin heterodimers ITGA6-ITGB1, ITGA5-ITGB3 and ITGA5-ITGB1 resulting in modulation of cell-matrix adhesion. Also regulates many processes through PTK2. Regulates blood vessel endothelial cell migration and angiogenesis by regulating VEGF protein expression through PTK2 activation. Regulates cell migration and cell contraction through PTK2 and SRC activation. Regulates focal adhesion density, F-actin conformation and cell adhesion capacity through interaction with PTK2. Positively regulates cell proliferation. Plays a role during cell death and cell blebbing. Promotes angiogenesis and vasculogenesis through induction of VEGFA via a HIF1A-dependent pathway. Also plays a role in embryo implantation by regulating surface trafficking of integrin heterodimer ITGA5-ITGB3. Plays a role in placental angiogenesis and uterine natural killer cell regulation at the maternal-fetal placental interface, however not required in the maternal tissues for a viable pregnancy. Involved in the early stages of embryogenic development and cardiogenesis, potentially via regulation of epithelial-mesenchymal transition timing. May play a role in glomerular filtration. The polypeptide is Epithelial membrane protein 2 (EMP2) (Bos taurus (Bovine)).